The sequence spans 632 residues: MHCMAVHQFSPSIVSSLPTISTYNNNHFCRFFTPKTSISPISKTKSKSSTCYPIQCTVVNNSSPSSTIVRRSANYEPPIWSFDYIQSLSTQYKGESYTRQLNKLKKEVKRMLLRMEINSLALLELIDTLQRLGISYHFKNEINTILKKKYNDNYINNNIITNPNYNNLYATALEFRLLRQHGYTVPQEIFNAFKDKRGKFKTSLSDDIMGVLCLYEASFYAMKHENILEEARIFSTKCLKKYMEKIENEEEKKILLLNDNNINSNLLLINHAFELPLHWRITRSEARWFIDEIYEKKQDMNSTLFEFAKLDFNIVQSTHQEDLQHLSRWWRDCKLGGKLNFARDRLMEAFLWDVGLKFEGEFSYFRRTNARLFVLITIIDDIYDVYGTLEELELFTSAVERWDVKLINELPDYMKMPFFVLHNTINEMGFDVLVEQNFVNIEYLKKSWVDLCKCYLQEAKWYYSGYQPTLEEYTELGWLSIGASVILMHAYFCFTNPITKQDLKSLQLQHHYPNIIKQACLITRLADDLGTSSDELNRGDVPKSIQCYMYDNNATEDEAREHIKFLISETWKDMNKKDEDESCLSENFVEVCKNMARTALFIYENGDGHGSQNSLSKERISTLIITPINIPK.

The N-terminal 55 residues, Met-1–Gln-55, are a transit peptide targeting the chloroplast. Positions 343, 380, 384, 524, and 527 each coordinate (2E)-geranyl diphosphate. Mg(2+)-binding residues include Asp-380 and Asp-384. The DDXXD motif motif lies at Asp-380–Asp-384. Mg(2+)-binding residues include Asp-527, Thr-531, and Glu-535.

It belongs to the terpene synthase family. Tpsb subfamily. Requires Mg(2+) as cofactor. It depends on Mn(2+) as a cofactor. In terms of tissue distribution, expressed in glandular trichomes two to four weeks after flowering onset.

It is found in the plastid. The protein resides in the chloroplast. It carries out the reaction (2E)-geranyl diphosphate = beta-myrcene + diphosphate. The protein operates within secondary metabolite biosynthesis; terpenoid biosynthesis. Its function is as follows. Involved in monoterpene (C10) olefins biosynthesis, constituants of cannabinoids and terpenoids-rich resins. Catalyzes strictly the conversion of (2E)-geranyl diphosphate to beta-myrcene. This Cannabis sativa (Hemp) protein is Myrcene synthase TPS3FN, chloroplastic.